Consider the following 445-residue polypeptide: V-type proton ATPase subunit H (445 aa).

This sequence belongs to the V-ATPase H subunit family. In terms of assembly, V-ATPase is a heteromultimeric enzyme composed of a peripheral catalytic V1 complex (components A to H) attached to an integral membrane V0 proton pore complex (components: a, c, c', c'' and d).

Its function is as follows. Subunit of the peripheral V1 complex of vacuolar ATPase. Subunit H activates the ATPase activity of the enzyme and couples ATPase activity to proton flow. Vacuolar ATPase is responsible for acidifying a variety of intracellular compartments in eukaryotic cells, thus providing most of the energy required for transport processes in the vacuolar system. The sequence is that of V-type proton ATPase subunit H (vatH) from Dictyostelium discoideum (Social amoeba).